A 98-amino-acid polypeptide reads, in one-letter code: Small ribosomal subunit protein bS20 (98 aa).

Belongs to the bacterial ribosomal protein bS20 family.

Its function is as follows. Binds directly to 16S ribosomal RNA. The chain is Small ribosomal subunit protein bS20 from Prochlorococcus marinus (strain NATL1A).